Reading from the N-terminus, the 510-residue chain is Inner membrane protein YeeR (510 aa).

Residue M1 is a topological domain, cytoplasmic. The helical transmembrane segment at 2 to 22 threads the bilayer; that stretch reads LQIVGALILLIAGFAILRLLF. The Periplasmic segment spans residues 23–30; sequence RALISTAS. Residues 31 to 51 form a helical membrane-spanning segment; sequence ALAGLILLCLFGPALLAGYIT. Residues 52–61 lie on the Cytoplasmic side of the membrane; it reads ERITRLFHIR. The chain crosses the membrane as a helical span at residues 62–82; sequence WLAGVFLTIAGMIISFMWGLD. Residues 83 to 94 lie on the Periplasmic side of the membrane; the sequence is GKHIALEAHTFD. A helical membrane pass occupies residues 95-115; that stretch reads SVKFILTTALAGGLLAVPLQI. Residues 116 to 136 lie on the Cytoplasmic side of the membrane; the sequence is KNIQQNGITPEDISKEINGYY. Residues 137–157 traverse the membrane as a helical segment; it reads CCFYTAFFLMACSACAPLIAL. Residues 158 to 164 are Periplasmic-facing; it reads QYDISPS. A helical transmembrane segment spans residues 165 to 185; sequence LMWWGGLLYWLAALVTLLWAA. Residues 186–510 lie on the Cytoplasmic side of the membrane; it reads SQIQALKKLT…KIREGKVEER (325 aa).

Its subcellular location is the cell inner membrane. The chain is Inner membrane protein YeeR (yeeR) from Escherichia coli (strain K12).